A 534-amino-acid polypeptide reads, in one-letter code: Membrane protein insertase YidC (534 aa).

A run of 5 helical transmembrane segments spans residues 7–27 (IIAV…SEYM), 319–339 (AIDL…LDFF), 342–362 (YVGN…LVFW), 413–433 (GGCL…QALL), and 493–513 (VMMF…SGLV).

Belongs to the OXA1/ALB3/YidC family. Type 1 subfamily. Interacts with the Sec translocase complex via SecD. Specifically interacts with transmembrane segments of nascent integral membrane proteins during membrane integration.

It is found in the cell inner membrane. Its function is as follows. Required for the insertion and/or proper folding and/or complex formation of integral membrane proteins into the membrane. Involved in integration of membrane proteins that insert both dependently and independently of the Sec translocase complex, as well as at least some lipoproteins. Aids folding of multispanning membrane proteins. This is Membrane protein insertase YidC from Nitratidesulfovibrio vulgaris (strain ATCC 29579 / DSM 644 / CCUG 34227 / NCIMB 8303 / VKM B-1760 / Hildenborough) (Desulfovibrio vulgaris).